Here is a 189-residue protein sequence, read N- to C-terminus: Riboflavin kinase (189 aa).

Mg(2+)-binding residues include Thr-42 and Asn-44. Glu-124 (nucleophile) is an active-site residue.

It belongs to the flavokinase family. Requires Zn(2+) as cofactor. Mg(2+) serves as cofactor.

It catalyses the reaction riboflavin + ATP = FMN + ADP + H(+). Its pathway is cofactor biosynthesis; FMN biosynthesis; FMN from riboflavin (ATP route): step 1/1. In terms of biological role, catalyzes the phosphorylation of riboflavin (vitamin B2) to form flavin mononucleotide (FMN) coenzyme. The protein is Riboflavin kinase (FMN1) of Candida glabrata (strain ATCC 2001 / BCRC 20586 / JCM 3761 / NBRC 0622 / NRRL Y-65 / CBS 138) (Yeast).